The chain runs to 354 residues: uncharacterized protein (354 aa).

Positions 96–130 are disordered; it reads QVCPASAPNGKRAMKIPKVKEPRGENSSKKSSADQ. Residues 113-127 are compositionally biased toward basic and acidic residues; the sequence is KVKEPRGENSSKKSS.

This is an uncharacterized protein from Caenorhabditis elegans.